Here is a 119-residue protein sequence, read N- to C-terminus: Large ribosomal subunit protein bL20 (119 aa).

It belongs to the bacterial ribosomal protein bL20 family.

In terms of biological role, binds directly to 23S ribosomal RNA and is necessary for the in vitro assembly process of the 50S ribosomal subunit. It is not involved in the protein synthesizing functions of that subunit. The protein is Large ribosomal subunit protein bL20 of Gluconacetobacter diazotrophicus (strain ATCC 49037 / DSM 5601 / CCUG 37298 / CIP 103539 / LMG 7603 / PAl5).